A 333-amino-acid polypeptide reads, in one-letter code: Glyceraldehyde-3-phosphate dehydrogenase (333 aa).

Residues 11–12, aspartate 33, arginine 78, and serine 120 each bind NAD(+); that span reads RI. Residues 149-151, threonine 180, 209-210, and arginine 232 contribute to the D-glyceraldehyde 3-phosphate site; these read SCT and TG. Cysteine 150 (nucleophile) is an active-site residue. Cysteine 150 is subject to S-nitrosocysteine. Residue asparagine 314 participates in NAD(+) binding.

It belongs to the glyceraldehyde-3-phosphate dehydrogenase family. As to quaternary structure, homotetramer. S-nitrosylation of Cys-150 leads to translocation to the nucleus.

Its subcellular location is the cytoplasm. It localises to the cytosol. It is found in the cytoskeleton. The protein resides in the nucleus. It carries out the reaction D-glyceraldehyde 3-phosphate + phosphate + NAD(+) = (2R)-3-phospho-glyceroyl phosphate + NADH + H(+). The catalysed reaction is S-nitroso-L-cysteinyl-[GAPDH] + L-cysteinyl-[protein] = L-cysteinyl-[GAPDH] + S-nitroso-L-cysteinyl-[protein]. The protein operates within carbohydrate degradation; glycolysis; pyruvate from D-glyceraldehyde 3-phosphate: step 1/5. Has both glyceraldehyde-3-phosphate dehydrogenase and nitrosylase activities, thereby playing a role in glycolysis and nuclear functions, respectively. Glyceraldehyde-3-phosphate dehydrogenase is a key enzyme in glycolysis that catalyzes the first step of the pathway by converting D-glyceraldehyde 3-phosphate (G3P) into 3-phospho-D-glyceroyl phosphate. Participates in nuclear events including transcription, RNA transport, DNA replication and apoptosis. Nuclear functions are probably due to the nitrosylase activity that mediates cysteine S-nitrosylation of nuclear target proteins such as SIRT1, HDAC2 and PRKDC. The chain is Glyceraldehyde-3-phosphate dehydrogenase from Danio rerio (Zebrafish).